Here is a 399-residue protein sequence, read N- to C-terminus: MNTLDFDKKPEDTRVVVAMSGGVDSSVVAGILKRQGYDVLGITLQLYDHGAAVHRAGSCCAGQDIDDARRVCETIGIPHYVLDYEKRFRETVINPFAESYVAGETPIPCVSCNQTVKFADLLATAKELGADALATGHYIRSRPNPSADHPGRRALYRPADADRDQSYFLFATTQEQIDYLRFPLGGMPKAETRALAEEMGLVVAKKADSQDICFVPQGKYSDVIAKLKPNAALAGEIVHLDGRVLGRHEGILHYTIGQRRGIGVATGDPLYVVFLDARSRRVIVGPKEALETHRVYLRDVNWLGDEPLLEAASGEGFACYAKVRSTRPPEPAVLRADKDGIYVDLTIGEAGVAPGQACALYSAPGDDARVYGGGFIERSEREPMAEASLKALLASPVAA.

ATP contacts are provided by residues 18 to 25 and L44; that span reads AMSGGVDS. C112 (nucleophile) is an active-site residue. The cysteines at positions 112 and 213 are disulfide-linked. G136 contributes to the ATP binding site. Residues 163-165 form an interaction with tRNA region; that stretch reads RDQ. C213 serves as the catalytic Cysteine persulfide intermediate.

The protein belongs to the MnmA/TRMU family.

It localises to the cytoplasm. The catalysed reaction is S-sulfanyl-L-cysteinyl-[protein] + uridine(34) in tRNA + AH2 + ATP = 2-thiouridine(34) in tRNA + L-cysteinyl-[protein] + A + AMP + diphosphate + H(+). Its function is as follows. Catalyzes the 2-thiolation of uridine at the wobble position (U34) of tRNA, leading to the formation of s(2)U34. This is tRNA-specific 2-thiouridylase MnmA from Rhizobium rhizogenes (strain K84 / ATCC BAA-868) (Agrobacterium radiobacter).